A 126-amino-acid chain; its full sequence is B3 domain-containing protein At5g54067 (126 aa).

The TF-B3 DNA-binding region spans 20 to 118; sequence SDIVGNVVLP…KFVVLNFQYS (99 aa).

It is found in the nucleus. This Arabidopsis thaliana (Mouse-ear cress) protein is B3 domain-containing protein At5g54067.